The sequence spans 293 residues: Amine sulfotransferase (293 aa).

46-51 (KSGTIW) provides a ligand contact to 3'-phosphoadenylyl sulfate. Histidine 101 functions as the Proton acceptor in the catalytic mechanism. 3'-phosphoadenylyl sulfate contacts are provided by residues arginine 123, serine 131, 220 to 225 (ATFQKM), and 252 to 254 (RKG).

Belongs to the sulfotransferase 1 family.

Its subcellular location is the cytoplasm. It catalyses the reaction a primary amine + 3'-phosphoadenylyl sulfate = a sulfamate + adenosine 3',5'-bisphosphate + 2 H(+). Its function is as follows. Sulfotransferase that utilizes 3'-phospho-5'-adenylyl sulfate (PAPS) as sulfonate donor to catalyze the N-sulfonation of amines. The protein is Amine sulfotransferase (Sult3a1) of Mus musculus (Mouse).